We begin with the raw amino-acid sequence, 247 residues long: Aliphatic sulfonates import ATP-binding protein SsuB 3 (247 aa).

Positions 28-242 (VSVRGLQRRY…ALRSILLEEL (215 aa)) constitute an ABC transporter domain. 60-67 (GESGCGKT) lines the ATP pocket.

It belongs to the ABC transporter superfamily. Aliphatic sulfonates importer (TC 3.A.1.17.2) family. In terms of assembly, the complex is composed of two ATP-binding proteins (SsuB), two transmembrane proteins (SsuC) and a solute-binding protein (SsuA).

Its subcellular location is the cell inner membrane. It catalyses the reaction ATP + H2O + aliphatic sulfonate-[sulfonate-binding protein]Side 1 = ADP + phosphate + aliphatic sulfonateSide 2 + [sulfonate-binding protein]Side 1.. In terms of biological role, part of the ABC transporter complex SsuABC involved in aliphatic sulfonates import. Responsible for energy coupling to the transport system. The sequence is that of Aliphatic sulfonates import ATP-binding protein SsuB 3 from Paraburkholderia xenovorans (strain LB400).